The primary structure comprises 285 residues: Pantothenate synthetase (285 aa).

Residue 30-37 (MGFLHEGH) participates in ATP binding. His37 serves as the catalytic Proton donor. A (R)-pantoate-binding site is contributed by Gln61. Gln61 contacts beta-alanine. Residue 147-150 (GQKD) participates in ATP binding. (R)-pantoate is bound at residue Gln153. Residues Val176 and 184–187 (KSSR) contribute to the ATP site.

Belongs to the pantothenate synthetase family. As to quaternary structure, homodimer.

Its subcellular location is the cytoplasm. The enzyme catalyses (R)-pantoate + beta-alanine + ATP = (R)-pantothenate + AMP + diphosphate + H(+). Its pathway is cofactor biosynthesis; (R)-pantothenate biosynthesis; (R)-pantothenate from (R)-pantoate and beta-alanine: step 1/1. Functionally, catalyzes the condensation of pantoate with beta-alanine in an ATP-dependent reaction via a pantoyl-adenylate intermediate. This is Pantothenate synthetase from Listeria monocytogenes serovar 1/2a (strain ATCC BAA-679 / EGD-e).